The chain runs to 107 residues: U1-lycotoxin-Ls1t (107 aa).

The signal sequence occupies residues 1–20 (MMKVLVVVALLVTLISYSSS). The propeptide occupies 21 to 41 (EGIDDLEADELLSLMANEQTR). Disulfide bonds link C44–C59, C51–C68, C58–C86, and C70–C84.

Belongs to the neurotoxin 19 (CSTX) family. 04 (U1-Lctx) subfamily. Expressed by the venom gland.

The protein localises to the secreted. This chain is U1-lycotoxin-Ls1t, found in Lycosa singoriensis (Wolf spider).